Here is a 578-residue protein sequence, read N- to C-terminus: Protein SIA1 (578 aa).

Positions 1–28 (MFRNRRILLYARRFFLVWICFLFITSWS) are cleaved as a signal peptide.

Functionally, may be involved in the activation of the plasma membrane proton-ATPase by glucose. This chain is Protein SIA1 (SIA1), found in Kluyveromyces lactis (strain ATCC 8585 / CBS 2359 / DSM 70799 / NBRC 1267 / NRRL Y-1140 / WM37) (Yeast).